Consider the following 352-residue polypeptide: Chalcone synthase C (352 aa).

The active site involves Cys170.

This sequence belongs to the thiolase-like superfamily. Chalcone/stilbene synthases family.

It catalyses the reaction (E)-4-coumaroyl-CoA + 3 malonyl-CoA + 3 H(+) = 2',4,4',6'-tetrahydroxychalcone + 3 CO2 + 4 CoA. It participates in secondary metabolite biosynthesis; flavonoid biosynthesis. In terms of biological role, the primary product of this enzyme is 4,2',4',6'-tetrahydroxychalcone (also termed naringenin-chalcone or chalcone) which can under specific conditions spontaneously isomerize into naringenin. This is Chalcone synthase C (CHSC) from Ipomoea purpurea (Common morning glory).